The following is a 358-amino-acid chain: Ubiquitin thioesterase OTU1 (358 aa).

The 83-residue stretch at phenylalanine 5 to alanine 87 folds into the Ubiquitin-like domain. The UBX-like stretch occupies residues lysine 8–leucine 94. A disordered region spans residues lysine 83–alanine 108. The segment covering proline 89–threonine 102 has biased composition (polar residues). An OTU domain is found at leucine 161 to glutamate 285. A cys-loop region spans residues valine 166 to cysteine 172. The active site involves aspartate 169. The active-site Nucleophile is cysteine 172. The segment at isoleucine 224–isoleucine 234 is variable-loop. The his-loop stretch occupies residues phenylalanine 274–histidine 278. Isoleucine 277 is a binding site for substrate. Histidine 278 is a catalytic residue. Positions methionine 301–glutamine 306 are S2 site. A C2H2-type zinc finger spans residues leucine 328–histidine 352. Histidine 352 is an active-site residue.

It carries out the reaction Thiol-dependent hydrolysis of ester, thioester, amide, peptide and isopeptide bonds formed by the C-terminal Gly of ubiquitin (a 76-residue protein attached to proteins as an intracellular targeting signal).. Functionally, hydrolase that can remove conjugated ubiquitin from proteins and may therefore play an important regulatory role at the level of protein turnover by preventing degradation. The chain is Ubiquitin thioesterase OTU1 from Drosophila pseudoobscura pseudoobscura (Fruit fly).